We begin with the raw amino-acid sequence, 615 residues long: tRNA uridine 5-carboxymethylaminomethyl modification enzyme MnmG (615 aa).

11–16 (GLGHAG) serves as a coordination point for FAD. Residue 278 to 292 (GPRYCPSLEDKVVRF) coordinates NAD(+).

It belongs to the MnmG family. As to quaternary structure, homodimer. Heterotetramer of two MnmE and two MnmG subunits. The cofactor is FAD.

The protein localises to the cytoplasm. NAD-binding protein involved in the addition of a carboxymethylaminomethyl (cmnm) group at the wobble position (U34) of certain tRNAs, forming tRNA-cmnm(5)s(2)U34. This chain is tRNA uridine 5-carboxymethylaminomethyl modification enzyme MnmG, found in Myxococcus xanthus (strain DK1622).